The sequence spans 120 residues: NAD(P)H-quinone oxidoreductase subunit 3, chloroplastic (120 aa).

3 helical membrane-spanning segments follow: residues Leu-14–Ile-34, Met-64–Met-84, and Ile-88–Leu-108.

Belongs to the complex I subunit 3 family. In terms of assembly, NDH is composed of at least 16 different subunits, 5 of which are encoded in the nucleus.

The protein resides in the plastid. Its subcellular location is the chloroplast thylakoid membrane. It catalyses the reaction a plastoquinone + NADH + (n+1) H(+)(in) = a plastoquinol + NAD(+) + n H(+)(out). It carries out the reaction a plastoquinone + NADPH + (n+1) H(+)(in) = a plastoquinol + NADP(+) + n H(+)(out). Its function is as follows. NDH shuttles electrons from NAD(P)H:plastoquinone, via FMN and iron-sulfur (Fe-S) centers, to quinones in the photosynthetic chain and possibly in a chloroplast respiratory chain. The immediate electron acceptor for the enzyme in this species is believed to be plastoquinone. Couples the redox reaction to proton translocation, and thus conserves the redox energy in a proton gradient. In Coffea arabica (Arabian coffee), this protein is NAD(P)H-quinone oxidoreductase subunit 3, chloroplastic.